We begin with the raw amino-acid sequence, 217 residues long: Probable ribonuclease P protein subunit 1 (217 aa).

It belongs to the eukaryotic/archaeal RNase P protein component 1 family.

It localises to the nucleus. It is found in the nucleolus. The enzyme catalyses Endonucleolytic cleavage of RNA, removing 5'-extranucleotides from tRNA precursor.. In terms of biological role, part of ribonuclease P, a protein complex that generates mature tRNA molecules by cleaving their 5'-ends. This Schizosaccharomyces pombe (strain 972 / ATCC 24843) (Fission yeast) protein is Probable ribonuclease P protein subunit 1.